We begin with the raw amino-acid sequence, 169 residues long: Peptide methionine sulfoxide reductase MsrA (169 aa).

Residue cysteine 10 is part of the active site.

Belongs to the MsrA Met sulfoxide reductase family.

The catalysed reaction is L-methionyl-[protein] + [thioredoxin]-disulfide + H2O = L-methionyl-(S)-S-oxide-[protein] + [thioredoxin]-dithiol. It catalyses the reaction [thioredoxin]-disulfide + L-methionine + H2O = L-methionine (S)-S-oxide + [thioredoxin]-dithiol. Has an important function as a repair enzyme for proteins that have been inactivated by oxidation. Catalyzes the reversible oxidation-reduction of methionine sulfoxide in proteins to methionine. The protein is Peptide methionine sulfoxide reductase MsrA of Streptococcus pyogenes serotype M6 (strain ATCC BAA-946 / MGAS10394).